Here is a 323-residue protein sequence, read N- to C-terminus: Aquaporin NIP3-1 (323 aa).

N-acetylmethionine is present on methionine 1. Helical transmembrane passes span leucine 45 to valine 65 and valine 73 to isoleucine 93. The NPA 1 signature appears at asparagine 102–alanine 104. The next 3 membrane-spanning stretches (helical) occupy residues glycine 122–phenylalanine 142, threonine 167–alanine 187, and phenylalanine 196–serine 216. Residues asparagine 221–alanine 223 carry the NPA 2 motif. The chain crosses the membrane as a helical span at residues tryptophan 239–leucine 259.

Belongs to the MIP/aquaporin (TC 1.A.8) family. NIP (TC 1.A.8.12) subfamily.

It localises to the membrane. Its function is as follows. Aquaporins facilitate the transport of water and small neutral solutes across cell membranes. The protein is Aquaporin NIP3-1 (NIP3-1) of Arabidopsis thaliana (Mouse-ear cress).